A 530-amino-acid chain; its full sequence is Ubiquitin carboxyl-terminal hydrolase 17 (530 aa).

Residues 80–375 (AGLQNMGNTC…QAYVLFYIQK (296 aa)) enclose the USP domain. Residue cysteine 89 is the Nucleophile of the active site. Histidine 334 serves as the catalytic Proton acceptor. Basic and acidic residues-rich tracts occupy residues 382–392 (SESVSRGREPR) and 398–413 (DTDR…RDHP). 2 disordered regions span residues 382 to 416 (SESV…PCLQ) and 490 to 530 (SSTT…LVCQ). The segment at 399–530 (TDRRATQGEL…HSKRALLVCQ (132 aa)) is mediates interaction with SUDS3. Over residues 498 to 510 (ESVNTGTLASLQG) the composition is skewed to polar residues. Positions 511-524 (RTRRSKGKNKHSKR) are enriched in basic residues.

Belongs to the peptidase C19 family. USP17 subfamily. As to quaternary structure, interacts with SUDS3; the interaction is direct. As to expression, broadly expressed.

Its subcellular location is the nucleus. The protein resides in the endoplasmic reticulum. It catalyses the reaction Thiol-dependent hydrolysis of ester, thioester, amide, peptide and isopeptide bonds formed by the C-terminal Gly of ubiquitin (a 76-residue protein attached to proteins as an intracellular targeting signal).. Deubiquitinating enzyme that removes conjugated ubiquitin from specific proteins to regulate different cellular processes. Regulates cell proliferation by deubiquitinating and inhibiting RCE1 thereby controlling the small GTPases NRAS and HRAS localization and activation. In parallel, mediates deubiquitination of CDC25A, preventing CDC25A degradation by the proteasome during the G1/S and G2/M phases promoting cell-cycle progression. Also regulates cell proliferation and apoptosis through deubiquitination of SUDS3 a regulator of histone deacetylation. Through activation of the Rho family GTPases RAC1A, CDC42 and RHOA, regulates cell migration. Through the cleavage of 'Lys-48'- and 'Lys-63'-linked polyubiquitin chains of the cytoplasmic innate immune receptors RIGI and IFIH1 stimulates the cellular response to viral infection. The sequence is that of Ubiquitin carboxyl-terminal hydrolase 17 (USP17L2) from Homo sapiens (Human).